A 296-amino-acid chain; its full sequence is NAD kinase (296 aa).

The active-site Proton acceptor is the Asp73. NAD(+) contacts are provided by residues 73-74 (DG), Lys78, 151-152 (NE), Arg178, Asp180, and 191-196 (TAHAMS).

The protein belongs to the NAD kinase family. The cofactor is a divalent metal cation.

The protein resides in the cytoplasm. The catalysed reaction is NAD(+) + ATP = ADP + NADP(+) + H(+). In terms of biological role, involved in the regulation of the intracellular balance of NAD and NADP, and is a key enzyme in the biosynthesis of NADP. Catalyzes specifically the phosphorylation on 2'-hydroxyl of the adenosine moiety of NAD to yield NADP. This Francisella tularensis subsp. tularensis (strain FSC 198) protein is NAD kinase.